The primary structure comprises 720 residues: Probable GTPase-activating protein GYL1 (720 aa).

An N-acetylmethionine modification is found at methionine 1. Over residues 1 to 52 the composition is skewed to basic and acidic residues; sequence MNSNEDIHEERIEVPRTPHQTQPEKDSDRIALRDEISVPEGDEKAYSDEKVE. The tract at residues 1–132 is disordered; that stretch reads MNSNEDIHEE…TSPPLPPRAD (132 aa). Threonine 17 is modified (phosphothreonine). Serine 37 is modified (phosphoserine). Residues 54 to 66 are compositionally biased toward polar residues; the sequence is ATTNASSNFGSNE. The residue at position 73 (serine 73) is a Phosphoserine. Residues 95 to 108 show a composition bias toward polar residues; sequence SKTILPSDDLSQQL. The segment covering 111–120 has biased composition (basic and acidic residues); that stretch reads EESKVEEALK. At serine 139 the chain carries Phosphoserine. Disordered regions lie at residues 144–164 and 179–210; these read SLPP…RPQL and APHG…PRRI. A compositionally biased stretch (polar residues) spans 184 to 196; the sequence is ATPSKSPTSAVGN. In terms of domain architecture, Rab-GAP TBC spans 297 to 477; the sequence is GIPAAYRLVV…RIGDMVFLEG (181 aa). Lysine 498 participates in a covalent cross-link: Glycyl lysine isopeptide (Lys-Gly) (interchain with G-Cter in SUMO). Residues 572–696 adopt a coiled-coil conformation; sequence QYKSITEKNL…EIKTANKNGT (125 aa).

The protein belongs to the GYP5 family. Interacts with GYP5 and RVS167. Is part of SEC4-containing complexes.

It is found in the cytoplasm. The protein localises to the bud. The protein resides in the bud neck. Functionally, probable GTPase-activating protein which stimulates the GTP hydrolysis rate by GYP5 of YPT1 and SEC4. Involved in ER to Golgi trafficking and polarized exocytosis. This Saccharomyces cerevisiae (strain ATCC 204508 / S288c) (Baker's yeast) protein is Probable GTPase-activating protein GYL1 (GYL1).